A 153-amino-acid chain; its full sequence is Superoxide dismutase [Cu-Zn] (153 aa).

Cu cation is bound by residues His45, His47, and His62. An intrachain disulfide couples Cys56 to Cys145. His62, His70, His79, and Asp82 together coordinate Zn(2+). A Cu cation-binding site is contributed by His119.

It belongs to the Cu-Zn superoxide dismutase family. As to quaternary structure, homodimer. Requires Cu cation as cofactor. It depends on Zn(2+) as a cofactor.

Its subcellular location is the cytoplasm. The catalysed reaction is 2 superoxide + 2 H(+) = H2O2 + O2. Destroys radicals which are normally produced within the cells and which are toxic to biological systems. In Ceratitis capitata (Mediterranean fruit fly), this protein is Superoxide dismutase [Cu-Zn].